A 693-amino-acid chain; its full sequence is Adhesion G-protein coupled receptor G1 (693 aa).

The first 25 residues, Met1 to Gly25, serve as a signal peptide directing secretion. Heparin is bound at residue Arg26–Arg33. The Extracellular portion of the chain corresponds to Arg26 to His401. Intrachain disulfides connect Cys35-Cys91 and Cys121-Cys177. 3 N-linked (GlcNAc...) asparagine glycosylation sites follow: Asn39, Asn148, and Asn171. Leu190–Pro200 is a binding site for heparin. Residues Asp224–Val395 form the GAIN-B domain. Residues Asn234, Asn303, Asn324, and Asn341 are each glycosylated (N-linked (GlcNAc...) asparagine). Cystine bridges form between Cys346–Cys377 and Cys366–Cys379. Positions Cys346–Val395 are GPS. A stachel region spans residues Tyr384–Ala397. A helical membrane pass occupies residues Tyr402 to Ala424. The Cytoplasmic portion of the chain corresponds to Tyr425–Lys437. A helical membrane pass occupies residues Pro438–Phe460. Over Leu461–Pro465 the chain is Extracellular. Residues Val466–Leu495 form a helical membrane-spanning segment. Cys475 and Cys562 form a disulfide bridge. Over Glu496 to Thr510 the chain is Cytoplasmic. The chain crosses the membrane as a helical span at residues Tyr511 to Leu533. At Val534–Cys562 the chain is on the extracellular side. Residues Trp563–Met588 traverse the membrane as a helical segment. Residues Leu589–His602 lie on the Cytoplasmic side of the membrane. Residues Thr603 to Ala624 traverse the membrane as a helical segment. Residues Leu625–Phe628 lie on the Extracellular side of the membrane. Residues Ser629–Ile654 traverse the membrane as a helical segment. The Cytoplasmic segment spans residues Phe655–Ile693. Residues Ser670–Ile693 are disordered. Over residues Ser684–Ile693 the composition is skewed to low complexity.

This sequence belongs to the G-protein coupled receptor 2 family. LN-TM7 subfamily. Heterodimer of 2 chains generated by proteolytic processing; the large extracellular N-terminal fragment (ADGRG1 NT) and the membrane-bound C-terminal fragment (ADGRG1-CT) predominantly remain associated and non-covalently linked. ADGRG1 NT self-associates in a trans-trans manner; the homophilic interaction enhances receptor signaling. Interacts with TGM2. Interacts with heparin; leading to the reduction of ADGRG1 shedding. Interacts with COL3A1. Part of a GPCR-tetraspanin complex at least consisting of ADGRG1, CD81, eventually CD9, and GNA11 in which CD81 is enhancing the association of ADGRG1 with GNA11. Autoproteolytically cleaved into 2 fragments; the large extracellular N-terminal fragment (ADGRG1 NT) and the membrane-bound C-terminal fragment (ADGRG1 CT) predominantly remain associated and non-covalently linked. Shedding to yield the secreted ADGRG1 N-terminal fragment seems to involve metalloprotease(s). In terms of processing, N-glycosylated. Contains sialic acid residues. Post-translationally, ubiquitinated. Undergoes polyubiquitination upon activation. Widely distributed with highest levels found in thyroid gland, brain and heart. Expressed in a great number of tumor cells. Expression is down-regulated in different tumors from highly metastatic cells.

The protein resides in the cell membrane. It is found in the secreted. It localises to the membrane raft. Forms a heterodimer of 2 chains generated by proteolytic processing that remain associated through non-covalent interactions mediated by the GAIN-B domain. In the inactivated receptor, the Stachel sequence (also named stalk) is embedded in the GAIN-B domain, where it adopts a beta-strand conformation. On activation, the Stachel moves into the 7 transmembrane region and adopts a twisted hook-shaped configuration that forms contacts within the receptor, leading to coupling of a G-alpha protein, which activates signaling. The cleaved GAIN-B and N-terminal domains can then dissociate from the rest of the receptor. In terms of biological role, adhesion G-protein coupled receptor (aGPCR) for steroid hormone 17alpha-hydroxypregnenolone (17-OH), which is involved in cell adhesion and cell-cell interactions. Ligand binding causes a conformation change that triggers signaling via guanine nucleotide-binding proteins (G proteins) and modulates the activity of downstream effectors, such as RhoA pathway. ADGRG1 is coupled to G(12) and/or G(13) G proteins (GNA12 and GNA13, respectively) and mediates the activation Rho small GTPases. Acts as a potent suppressor of ferroptosis: binding to 17-OH-binding initiates signaling that down-regulates CD36 and alleviates ferroptosis-induced liver injury. Ligand-binding also induces cell adhesion activity via association with proteins such as collagen III/COL3A1 and TGM2. Mediates cell matrix adhesion in developing neurons and hematopoietic stem cells. Involved in cortical development, specifically in maintenance of the pial basement membrane integrity and in cortical lamination: association with COL3A1 in the developing brain inhibits neuronal migration via activation of the RhoA pathway. Together with TGM2, acts as a regulator of myelination and myelin repair in oligodendrocyte precursor cells. Acts as a hemostatic sensor of shear force: G protein-coupled receptor signaling is activated in response to shear force in platelets, promoting G(13) G protein signaling, and platelet shape change and aggregation in a COL3A1-dependent manner. Acts as an inhibitor of VEGFA production thereby inhibiting angiogenesis through a signaling pathway mediated by PRKCA. Plays a role in the maintenance of hematopoietic stem cells in bone marrow niche. Plays an essential role in testis development. The protein is Adhesion G-protein coupled receptor G1 of Homo sapiens (Human).